We begin with the raw amino-acid sequence, 227 residues long: Uridylate kinase (227 aa).

6–10 (KVSGK) is a binding site for ATP. Residue glycine 43 participates in UMP binding. The ATP site is built by glycine 44 and arginine 48. UMP-binding positions include aspartate 65 and 113-119 (FQPGQST). Residues threonine 139, asparagine 140, tyrosine 145, and aspartate 148 each coordinate ATP.

It belongs to the UMP kinase family. Homohexamer.

Its subcellular location is the cytoplasm. The enzyme catalyses UMP + ATP = UDP + ADP. Its pathway is pyrimidine metabolism; CTP biosynthesis via de novo pathway; UDP from UMP (UMPK route): step 1/1. Inhibited by UTP. Its function is as follows. Catalyzes the reversible phosphorylation of UMP to UDP. The chain is Uridylate kinase from Sulfolobus acidocaldarius (strain ATCC 33909 / DSM 639 / JCM 8929 / NBRC 15157 / NCIMB 11770).